The primary structure comprises 169 residues: Der GTPase-activating protein YihI (169 aa).

Disordered stretches follow at residues 1–99 (MKPS…QAEL) and 146–169 (SYDD…LRGN). Residues 10-19 (SKGHAKARRK) are compositionally biased toward basic residues. Over residues 20-30 (TREELDQEARD) the composition is skewed to basic and acidic residues. Over residues 31-40 (RKRQKKRRGH) the composition is skewed to basic residues. Over residues 49–58 (GNTTSGSKGQ) the composition is skewed to polar residues. Positions 147–159 (YDDDEEEEEDEKQ) are enriched in acidic residues. Basic and acidic residues predominate over residues 160–169 (EDMMRLLRGN).

The protein belongs to the YihI family. In terms of assembly, interacts with Der.

Its function is as follows. A GTPase-activating protein (GAP) that modifies Der/EngA GTPase function. May play a role in ribosome biogenesis. This is Der GTPase-activating protein YihI from Escherichia coli O81 (strain ED1a).